The sequence spans 187 residues: MATTNDIKNGTVLKLEGQLWNIIEFQHVKPGKGGAFVRTKMRNVMSGKVVDKTFNAGLKIETATVDRRDYQYLYQDGADFVFMDTQDYDQITVSGATVGDATNFMLENQMVNIAIHEGTPLYIELPPSVVLEITYTEPGLQGDRSSAGTKPATLETGYEIQVPLFVENNTKVKVDTRDGSYLGRVND.

This sequence belongs to the elongation factor P family.

It localises to the cytoplasm. The protein operates within protein biosynthesis; polypeptide chain elongation. Its function is as follows. Involved in peptide bond synthesis. Stimulates efficient translation and peptide-bond synthesis on native or reconstituted 70S ribosomes in vitro. Probably functions indirectly by altering the affinity of the ribosome for aminoacyl-tRNA, thus increasing their reactivity as acceptors for peptidyl transferase. The protein is Elongation factor P of Arthrobacter sp. (strain FB24).